A 474-amino-acid polypeptide reads, in one-letter code: Dipeptidase A (474 aa).

The active site involves cysteine 6.

This sequence belongs to the peptidase C69 family. In terms of assembly, homooctamer.

The enzyme catalyses an L-aminoacyl-L-amino acid + H2O = 2 an L-alpha-amino acid. Its activity is regulated as follows. Inhibited by Zn(2+), Cu(2+), Ca(2+) and Cd(2+). Functionally, hydrolyzes a wide range of dipeptides but unable to hydrolyze dipeptides containing proline. Highest activity against Met-Ala. In Lactobacillus helveticus (Lactobacillus suntoryeus), this protein is Dipeptidase A (pepDA).